Here is a 211-residue protein sequence, read N- to C-terminus: Large ribosomal subunit protein uL3 (211 aa).

Gln150 is modified (N5-methylglutamine).

It belongs to the universal ribosomal protein uL3 family. As to quaternary structure, part of the 50S ribosomal subunit. Forms a cluster with proteins L14 and L19. Methylated by PrmB.

Functionally, one of the primary rRNA binding proteins, it binds directly near the 3'-end of the 23S rRNA, where it nucleates assembly of the 50S subunit. The polypeptide is Large ribosomal subunit protein uL3 (Pseudomonas syringae pv. tomato (strain ATCC BAA-871 / DC3000)).